Consider the following 538-residue polypeptide: Bifunctional purine biosynthesis protein PurH (538 aa).

The 153-residue stretch at 6–158 (KHIPAPDLHR…KNHAYVATVV (153 aa)) folds into the MGS-like domain.

This sequence belongs to the PurH family.

The catalysed reaction is (6R)-10-formyltetrahydrofolate + 5-amino-1-(5-phospho-beta-D-ribosyl)imidazole-4-carboxamide = 5-formamido-1-(5-phospho-D-ribosyl)imidazole-4-carboxamide + (6S)-5,6,7,8-tetrahydrofolate. The enzyme catalyses IMP + H2O = 5-formamido-1-(5-phospho-D-ribosyl)imidazole-4-carboxamide. It functions in the pathway purine metabolism; IMP biosynthesis via de novo pathway; 5-formamido-1-(5-phospho-D-ribosyl)imidazole-4-carboxamide from 5-amino-1-(5-phospho-D-ribosyl)imidazole-4-carboxamide (10-formyl THF route): step 1/1. The protein operates within purine metabolism; IMP biosynthesis via de novo pathway; IMP from 5-formamido-1-(5-phospho-D-ribosyl)imidazole-4-carboxamide: step 1/1. This Brucella melitensis biotype 2 (strain ATCC 23457) protein is Bifunctional purine biosynthesis protein PurH.